Consider the following 181-residue polypeptide: Monofunctional chorismate mutase (181 aa).

An N-terminal signal peptide occupies residues 1 to 20; the sequence is MIRHIAIFLCSLLMCSTTFA. Residues 21–102 form the Chorismate mutase domain; it reads DSVTSVSLGA…ASKAIQYRYL (82 aa). Residues arginine 38, lysine 49, aspartate 58, glutamate 62, and glutamine 98 each coordinate substrate.

The protein resides in the periplasm. The catalysed reaction is chorismate = prephenate. The protein operates within metabolic intermediate biosynthesis; prephenate biosynthesis; prephenate from chorismate: step 1/1. In terms of biological role, catalyzes the Claisen rearrangement of chorismate to prephenate. This Salmonella typhimurium protein is Monofunctional chorismate mutase.